Here is a 400-residue protein sequence, read N- to C-terminus: Endoglucanase A (400 aa).

An N-terminal signal peptide occupies residues 1 to 32; sequence MTKTFKKFSIAGLALLFMATAAFAGWSTKASA. Glu187 serves as the catalytic Proton donor. The active-site Nucleophile is Glu328.

The protein belongs to the glycosyl hydrolase 5 (cellulase A) family.

It localises to the secreted. The enzyme catalyses Endohydrolysis of (1-&gt;4)-beta-D-glucosidic linkages in cellulose, lichenin and cereal beta-D-glucans.. Its activity is regulated as follows. Strongly inhibited by Hg(2+), Ag(+) and Fe(3+). To a lesser extent, is also inhibited by Pb(2+), Mn(2+), Sn(2+) and Cu(2+). By contrast, Ni(2+), Zn(2+), Co(2+), Ba(2+) and NH(4)(+) do not affect enzyme activity, while 10 mM Ca(2+), and Mg(2+) produce a stimulating effect. Is also strongly inhibited by chemicals such as N-bromosuccinimide and dimethyl(2-dihydroxy-5-nitrobenzyl)sulphonium bromide. Is not affected by N-acetylimidazole. Functionally, endoglucanase with high activity on carboxymethylcellulose (CMC) and lichenan, but not active on Avicel. In Paenibacillus barcinonensis, this protein is Endoglucanase A (celA).